We begin with the raw amino-acid sequence, 60 residues long: UPF0391 membrane protein CCNA_00709 (60 aa).

The next 2 membrane-spanning stretches (helical) occupy residues 4 to 24 (WAII…SGLA) and 33 to 53 (ILFF…GTVF).

It belongs to the UPF0391 family.

The protein localises to the cell membrane. The protein is UPF0391 membrane protein CCNA_00709 of Caulobacter vibrioides (strain NA1000 / CB15N) (Caulobacter crescentus).